A 393-amino-acid polypeptide reads, in one-letter code: NAD(P)H-quinone oxidoreductase subunit H, chloroplastic (393 aa).

This sequence belongs to the complex I 49 kDa subunit family. As to quaternary structure, NDH is composed of at least 16 different subunits, 5 of which are encoded in the nucleus.

Its subcellular location is the plastid. It localises to the chloroplast thylakoid membrane. It catalyses the reaction a plastoquinone + NADH + (n+1) H(+)(in) = a plastoquinol + NAD(+) + n H(+)(out). It carries out the reaction a plastoquinone + NADPH + (n+1) H(+)(in) = a plastoquinol + NADP(+) + n H(+)(out). Functionally, NDH shuttles electrons from NAD(P)H:plastoquinone, via FMN and iron-sulfur (Fe-S) centers, to quinones in the photosynthetic chain and possibly in a chloroplast respiratory chain. The immediate electron acceptor for the enzyme in this species is believed to be plastoquinone. Couples the redox reaction to proton translocation, and thus conserves the redox energy in a proton gradient. The polypeptide is NAD(P)H-quinone oxidoreductase subunit H, chloroplastic (Carica papaya (Papaya)).